We begin with the raw amino-acid sequence, 83 residues long: Molybdopterin synthase sulfur carrier subunit (83 aa).

The residue at position 83 (glycine 83) is a 1-thioglycine; alternate. Glycine 83 bears the Glycyl adenylate; alternate mark.

It belongs to the MoaD family. MOCS2A subfamily. Heterotetramer; composed of 2 small (MOCS2A) and 2 large (MOCS2B) subunits. Post-translationally, C-terminal thiocarboxylation occurs in 2 steps, it is first acyl-adenylated (-COAMP) via the hesA/moeB/thiF part of MOCS3, then thiocarboxylated (-COSH) via the rhodanese domain of MOCS3.

The protein resides in the cytoplasm. The protein operates within cofactor biosynthesis; molybdopterin biosynthesis. Acts as a sulfur carrier required for molybdopterin biosynthesis. Component of the molybdopterin synthase complex that catalyzes the conversion of precursor Z into molybdopterin by mediating the incorporation of 2 sulfur atoms into precursor Z to generate a dithiolene group. In the complex, serves as sulfur donor by being thiocarboxylated (-COSH) at its C-terminus by MOCS3. After interaction with MOCS2B, the sulfur is then transferred to precursor Z to form molybdopterin. This chain is Molybdopterin synthase sulfur carrier subunit, found in Chlamydomonas reinhardtii (Chlamydomonas smithii).